A 292-amino-acid polypeptide reads, in one-letter code: tRNA pseudouridine synthase B (292 aa).

Asp-40 serves as the catalytic Nucleophile.

It belongs to the pseudouridine synthase TruB family. Type 1 subfamily.

The enzyme catalyses uridine(55) in tRNA = pseudouridine(55) in tRNA. Responsible for synthesis of pseudouridine from uracil-55 in the psi GC loop of transfer RNAs. In Mycoplasma mycoides subsp. mycoides SC (strain CCUG 32753 / NCTC 10114 / PG1), this protein is tRNA pseudouridine synthase B.